The chain runs to 247 residues: Cytochrome c oxidase subunit 2 (247 aa).

The Mitochondrial intermembrane segment spans residues methionine 1–asparagine 38. The helical transmembrane segment at valine 39–leucine 58 threads the bilayer. Over threonine 59 to glutamate 78 the chain is Mitochondrial matrix. The helical transmembrane segment at methionine 79–cysteine 103 threads the bilayer. Residues aspartate 104–glutamine 247 lie on the Mitochondrial intermembrane side of the membrane. Cu cation is bound by residues histidine 182, cysteine 217, glutamate 219, cysteine 221, histidine 225, and methionine 228. Glutamate 219 provides a ligand contact to Mg(2+).

It belongs to the cytochrome c oxidase subunit 2 family. As to quaternary structure, component of the cytochrome c oxidase (complex IV, CIV), a multisubunit enzyme composed of a catalytic core of 3 subunits and several supernumerary subunits. The complex exists as a monomer or a dimer and forms supercomplexes (SCs) in the inner mitochondrial membrane with ubiquinol-cytochrome c oxidoreductase (cytochrome b-c1 complex, complex III, CIII). Cu cation is required as a cofactor.

The protein localises to the mitochondrion inner membrane. It catalyses the reaction 4 Fe(II)-[cytochrome c] + O2 + 8 H(+)(in) = 4 Fe(III)-[cytochrome c] + 2 H2O + 4 H(+)(out). Its function is as follows. Component of the cytochrome c oxidase, the last enzyme in the mitochondrial electron transport chain which drives oxidative phosphorylation. The respiratory chain contains 3 multisubunit complexes succinate dehydrogenase (complex II, CII), ubiquinol-cytochrome c oxidoreductase (cytochrome b-c1 complex, complex III, CIII) and cytochrome c oxidase (complex IV, CIV), that cooperate to transfer electrons derived from NADH and succinate to molecular oxygen, creating an electrochemical gradient over the inner membrane that drives transmembrane transport and the ATP synthase. Cytochrome c oxidase is the component of the respiratory chain that catalyzes the reduction of oxygen to water. Electrons originating from reduced cytochrome c in the intermembrane space (IMS) are transferred via the dinuclear copper A center (CU(A)) of subunit 2 and heme A of subunit 1 to the active site in subunit 1, a binuclear center (BNC) formed by heme A3 and copper B (CU(B)). The BNC reduces molecular oxygen to 2 water molecules using 4 electrons from cytochrome c in the IMS and 4 protons from the mitochondrial matrix. This Brettanomyces custersianus (Yeast) protein is Cytochrome c oxidase subunit 2 (COX2).